Consider the following 241-residue polypeptide: 2-heptyl-1-hydroxyquinolin-4(1H)-one methyltransferase (241 aa).

Belongs to the methyltransferase superfamily. As to quaternary structure, monomer.

The protein localises to the cytoplasm. It catalyses the reaction 2-heptyl-1-hydroxy-4(1H)-quinolinone + S-adenosyl-L-methionine = 2-heptyl-1-methoxy-4(1H)-quinolinone + S-adenosyl-L-homocysteine + H(+). In terms of biological role, involved in cellular response to chemical stress and may contribute to resistance toward antimicrobial natural compounds as well as drugs. Catalyzes the methylation and detoxification of the P.aeruginosa toxin 2-heptyl-1-hydroxy-4(1H)-quinolinone (HQNO) to 2-heptyl-1-methoxy-4(1H)-quinolinone (HMOQ). This chain is 2-heptyl-1-hydroxyquinolin-4(1H)-one methyltransferase, found in Mycobacterium bovis (strain BCG / Pasteur 1173P2).